A 337-amino-acid polypeptide reads, in one-letter code: Ferrochelatase (337 aa).

Fe cation contacts are provided by histidine 189 and glutamate 293.

It belongs to the ferrochelatase family.

The protein localises to the cytoplasm. The enzyme catalyses heme b + 2 H(+) = protoporphyrin IX + Fe(2+). It functions in the pathway porphyrin-containing compound metabolism; protoheme biosynthesis; protoheme from protoporphyrin-IX: step 1/1. Its function is as follows. Catalyzes the ferrous insertion into protoporphyrin IX. This chain is Ferrochelatase, found in Pseudomonas putida (strain W619).